The following is a 130-amino-acid chain: Ornithine decarboxylase antizyme (130 aa).

Residues 1–14 (SDVPVHHRTDHDRA) are compositionally biased toward basic and acidic residues. Residues 1 to 56 (SDVPVHHRTDHDRASLLTGSSRKSSVDSAGGSLFEASSRASSPSSSSSSECSDTES) form a disordered region. The segment covering 17–27 (LTGSSRKSSVD) has biased composition (polar residues). The span at 32-51 (SLFEASSRASSPSSSSSSEC) shows a compositional bias: low complexity.

It belongs to the ODC antizyme family. In terms of assembly, interacts with ODC1 and thereby sterically blocks ODC homodimerization.

Functionally, ornithine decarboxylase (ODC) antizyme protein that negatively regulates ODC activity and intracellular polyamine biosynthesis and uptake in response to increased intracellular polyamine levels. Binds to ODC monomers, inhibiting the assembly of the functional ODC homodimer, and targets the monomers for ubiquitin-independent proteolytic destruction by the 26S proteasome. The polypeptide is Ornithine decarboxylase antizyme (Oda) (Drosophila virilis (Fruit fly)).